Reading from the N-terminus, the 249-residue chain is Dihydroneopterin 2',3'-cyclic phosphate phosphodiesterase (249 aa).

In terms of domain architecture, HD spans 58 to 172 (LIEHTISVTK…VHYADEADSK (115 aa)).

As to quaternary structure, homododecamer. Requires Fe(2+) as cofactor. The cofactor is Zn(2+).

It catalyses the reaction 7,8-dihydroneopterin 2',3'-cyclic phosphate + H2O = 7,8-dihydroneopterin 3'-phosphate + H(+). It carries out the reaction 7,8-dihydroneopterin 2',3'-cyclic phosphate + H2O = 7,8-dihydroneopterin 2'-phosphate + H(+). Its pathway is cofactor biosynthesis; 5,6,7,8-tetrahydromethanopterin biosynthesis. Functionally, cyclic phosphodiesterase that hydrolyzes the cyclic phosphate of 7,8-dihydroneopterin 2',3'-cyclic phosphate (H2N-cP) and converts it to a mixture of 7,8-dihydroneopterin 2'-phosphate (H2N-2'P) and 7,8-dihydroneopterin 3'-phosphate (H2N-3'P). Is also able to utilize other phosphodiesters as substrates in vitro: hydrolysis of bis-pNPP and pNPPC produces nitrophenyl phosphate, and that of 2',3'-cAMP produces 3'-AMP. ATP, 3',5'-cAMP, GTP, 3',5'-cGMP, and 4',5'-cFMN cannot serve as substrates. The chain is Dihydroneopterin 2',3'-cyclic phosphate phosphodiesterase (mptB) from Methanocaldococcus jannaschii (strain ATCC 43067 / DSM 2661 / JAL-1 / JCM 10045 / NBRC 100440) (Methanococcus jannaschii).